We begin with the raw amino-acid sequence, 42 residues long: Photosystem I reaction center subunit IX (42 aa).

The chain crosses the membrane as a helical span at residues 7–27 (YLSVAPVLSTLWFVALAGLLI).

Belongs to the PsaJ family.

It is found in the plastid. It localises to the chloroplast thylakoid membrane. In terms of biological role, may help in the organization of the PsaE and PsaF subunits. In Atropa belladonna (Belladonna), this protein is Photosystem I reaction center subunit IX.